The chain runs to 132 residues: Small ribosomal subunit protein uS8 (132 aa).

This sequence belongs to the universal ribosomal protein uS8 family. As to quaternary structure, part of the 30S ribosomal subunit. Contacts proteins S5 and S12.

Functionally, one of the primary rRNA binding proteins, it binds directly to 16S rRNA central domain where it helps coordinate assembly of the platform of the 30S subunit. The chain is Small ribosomal subunit protein uS8 from Geobacillus thermodenitrificans (strain NG80-2).